We begin with the raw amino-acid sequence, 574 residues long: Peptidyl-prolyl cis-trans isomerase FKBP9 (574 aa).

The first 26 residues, 1-26 (MAIRARSWRPPPPPLLLLLLWVTGQA), serve as a signal peptide directing secretion. PPIase FKBP-type domains follow at residues 58-146 (GDFV…MDIW), 170-258 (SDFV…LDLH), 282-369 (GDFL…IDFH), and 393-481 (GDYL…LELV). N-linked (GlcNAc...) asparagine glycans are attached at residues N178, N290, N306, and N401. EF-hand domains lie at 492–527 (WNGE…QVAS) and 537–572 (DAEM…TKHD). D505, D507, D509, E511, E516, D550, N552, D554, K556, and E561 together coordinate Ca(2+). The short motif at 571-574 (HDEL) is the Prevents secretion from ER element.

Post-translationally, phosphorylated.

It localises to the endoplasmic reticulum. It catalyses the reaction [protein]-peptidylproline (omega=180) = [protein]-peptidylproline (omega=0). Inhibited by FK506. Functionally, PPIases accelerate the folding of proteins during protein synthesis. The polypeptide is Peptidyl-prolyl cis-trans isomerase FKBP9 (FKBP9) (Bos taurus (Bovine)).